The following is a 22-amino-acid chain: Brevinin-2LTa (22 aa).

As to expression, expressed by the skin glands.

The protein resides in the secreted. Its function is as follows. Has antibacterial activity. The chain is Brevinin-2LTa from Rana latastei (Italian agile frog).